We begin with the raw amino-acid sequence, 944 residues long: Isoleucine--tRNA ligase (944 aa).

The 'HIGH' region signature appears at 58–68 (PYANGSIHIGH). E563 lines the L-isoleucyl-5'-AMP pocket. Positions 604 to 608 (KMSKS) match the 'KMSKS' region motif. K607 contributes to the ATP binding site. 4 residues coordinate Zn(2+): C907, C910, C927, and C930.

The protein belongs to the class-I aminoacyl-tRNA synthetase family. IleS type 1 subfamily. Monomer. Zn(2+) serves as cofactor.

Its subcellular location is the cytoplasm. The catalysed reaction is tRNA(Ile) + L-isoleucine + ATP = L-isoleucyl-tRNA(Ile) + AMP + diphosphate. In terms of biological role, catalyzes the attachment of isoleucine to tRNA(Ile). As IleRS can inadvertently accommodate and process structurally similar amino acids such as valine, to avoid such errors it has two additional distinct tRNA(Ile)-dependent editing activities. One activity is designated as 'pretransfer' editing and involves the hydrolysis of activated Val-AMP. The other activity is designated 'posttransfer' editing and involves deacylation of mischarged Val-tRNA(Ile). This chain is Isoleucine--tRNA ligase, found in Salmonella choleraesuis (strain SC-B67).